Reading from the N-terminus, the 206-residue chain is Oligoribonuclease (206 aa).

The Exonuclease domain maps to 20 to 183 (LVWLDMEMTG…ADIHESIDEL (164 aa)). Tyr-141 is a catalytic residue.

It belongs to the oligoribonuclease family.

The protein localises to the cytoplasm. In terms of biological role, 3'-to-5' exoribonuclease specific for small oligoribonucleotides. This is Oligoribonuclease from Burkholderia lata (strain ATCC 17760 / DSM 23089 / LMG 22485 / NCIMB 9086 / R18194 / 383).